Here is an 88-residue protein sequence, read N- to C-terminus: DNA-directed RNA polymerase subunit omega (88 aa).

It belongs to the RNA polymerase subunit omega family. The RNAP catalytic core consists of 2 alpha, 1 beta, 1 beta' and 1 omega subunit. When a sigma factor is associated with the core the holoenzyme is formed, which can initiate transcription.

The enzyme catalyses RNA(n) + a ribonucleoside 5'-triphosphate = RNA(n+1) + diphosphate. In terms of biological role, promotes RNA polymerase assembly. Latches the N- and C-terminal regions of the beta' subunit thereby facilitating its interaction with the beta and alpha subunits. This is DNA-directed RNA polymerase subunit omega from Pseudomonas aeruginosa (strain LESB58).